The following is a 362-amino-acid chain: NAD(P)H-quinone oxidoreductase subunit 1, chloroplastic (362 aa).

8 helical membrane-spanning segments follow: residues 29–49 (ILPI…IVWL), 103–123 (IAVI…HFVL), 128–148 (IGVF…LMAG), 164–184 (AAQS…ISLL), 202–222 (FFGW…ISSL), 247–267 (YSGI…LVSS), 303–323 (TMGI…SITI), and 335–355 (LLNL…LLTT).

It belongs to the complex I subunit 1 family. NDH is composed of at least 16 different subunits, 5 of which are encoded in the nucleus.

It localises to the plastid. The protein localises to the chloroplast thylakoid membrane. It catalyses the reaction a plastoquinone + NADH + (n+1) H(+)(in) = a plastoquinol + NAD(+) + n H(+)(out). The enzyme catalyses a plastoquinone + NADPH + (n+1) H(+)(in) = a plastoquinol + NADP(+) + n H(+)(out). Its function is as follows. NDH shuttles electrons from NAD(P)H:plastoquinone, via FMN and iron-sulfur (Fe-S) centers, to quinones in the photosynthetic chain and possibly in a chloroplast respiratory chain. The immediate electron acceptor for the enzyme in this species is believed to be plastoquinone. Couples the redox reaction to proton translocation, and thus conserves the redox energy in a proton gradient. In Triticum aestivum (Wheat), this protein is NAD(P)H-quinone oxidoreductase subunit 1, chloroplastic.